The following is a 196-amino-acid chain: Oocyte zinc finger protein XlCOF26 (196 aa).

C2H2-type zinc fingers lie at residues 6 to 28 (YSCT…QKNH), 34 to 56 (FTCT…QRIH), 62 to 84 (FTCT…QRIH), 90 to 112 (FTCT…HKIH), 118 to 140 (FTCP…QRTH), 146 to 168 (FTCT…QSTH), and 174 to 196 (FTCT…QMTH).

It belongs to the krueppel C2H2-type zinc-finger protein family.

It is found in the nucleus. In terms of biological role, may be involved in transcriptional regulation. In Xenopus laevis (African clawed frog), this protein is Oocyte zinc finger protein XlCOF26.